A 360-amino-acid chain; its full sequence is Cyclin-D1-binding protein 1 (360 aa).

Position 2 is an N-acetylalanine (A2). 2 interaction with TCF3 regions span residues 2 to 184 (ASAT…VDFV) and 150 to 360 (ISYN…ELEL). 2 interaction with RPLP0 regions span residues 2–190 (ASAT…AHEE) and 240–360 (LIIP…ELEL). The tract at residues 2–208 (ASATAPAAAV…DPYSGLLNDT (207 aa)) is required for interaction with CCND1.

It belongs to the CCNDBP1 family. In terms of assembly, interacts with CCND1 and GRAP2. May also interact with COPS5, RPLP0, SIRT6, SYF2 and TCF3. Phosphorylated.

The protein resides in the cytoplasm. Its subcellular location is the nucleus. Its function is as follows. May negatively regulate cell cycle progression. May act at least in part via inhibition of the cyclin-D1/CDK4 complex, thereby preventing phosphorylation of RB1 and blocking E2F-dependent transcription. This is Cyclin-D1-binding protein 1 (CCNDBP1) from Pongo abelii (Sumatran orangutan).